The following is a 432-amino-acid chain: Enolase (432 aa).

Gln-168 serves as a coordination point for (2R)-2-phosphoglycerate. The active-site Proton donor is Glu-210. Mg(2+)-binding residues include Asp-247, Glu-288, and Asp-315. Lys-340, Arg-369, Ser-370, and Lys-391 together coordinate (2R)-2-phosphoglycerate. The active-site Proton acceptor is Lys-340.

The protein belongs to the enolase family. Mg(2+) is required as a cofactor.

It localises to the cytoplasm. The protein localises to the secreted. It is found in the cell surface. The enzyme catalyses (2R)-2-phosphoglycerate = phosphoenolpyruvate + H2O. The protein operates within carbohydrate degradation; glycolysis; pyruvate from D-glyceraldehyde 3-phosphate: step 4/5. Catalyzes the reversible conversion of 2-phosphoglycerate (2-PG) into phosphoenolpyruvate (PEP). It is essential for the degradation of carbohydrates via glycolysis. In Microcystis aeruginosa (strain NIES-843 / IAM M-2473), this protein is Enolase.